The sequence spans 249 residues: ATP synthase subunit a 1 (249 aa).

6 consecutive transmembrane segments (helical) span residues 26–46 (FTNV…FLYL), 84–104 (FFPF…LGLF), 114–134 (IIVT…YGFF), 143–163 (LFVP…IEII), 193–213 (FVVS…LPLI), and 216–236 (VAIT…FTVL).

This sequence belongs to the ATPase A chain family. F-type ATPases have 2 components, CF(1) - the catalytic core - and CF(0) - the membrane proton channel. CF(1) has five subunits: alpha(3), beta(3), gamma(1), delta(1), epsilon(1). CF(0) has three main subunits: a(1), b(2) and c(9-12). The alpha and beta chains form an alternating ring which encloses part of the gamma chain. CF(1) is attached to CF(0) by a central stalk formed by the gamma and epsilon chains, while a peripheral stalk is formed by the delta and b chains.

The protein resides in the cell inner membrane. Functionally, key component of the proton channel; it plays a direct role in the translocation of protons across the membrane. The sequence is that of ATP synthase subunit a 1 from Brucella anthropi (strain ATCC 49188 / DSM 6882 / CCUG 24695 / JCM 21032 / LMG 3331 / NBRC 15819 / NCTC 12168 / Alc 37) (Ochrobactrum anthropi).